Consider the following 679-residue polypeptide: Glycine--tRNA ligase beta subunit (679 aa).

The protein belongs to the class-II aminoacyl-tRNA synthetase family. As to quaternary structure, tetramer of two alpha and two beta subunits.

Its subcellular location is the cytoplasm. It carries out the reaction tRNA(Gly) + glycine + ATP = glycyl-tRNA(Gly) + AMP + diphosphate. The protein is Glycine--tRNA ligase beta subunit of Streptococcus pyogenes serotype M12 (strain MGAS9429).